A 4144-amino-acid polypeptide reads, in one-letter code: DNA-dependent protein kinase catalytic subunit (4144 aa).

Residue K127 is modified to N6-acetyllysine. Residues 298–333 (DNYVSLFEVLSKWCSHTNVEMKKAAHSALESFLKQV) form an HEAT 1 repeat. Phosphoserine is present on residues S521, S851, and S903. One copy of the HEAT 2 repeat lies at 1014-1050 (QDTVALLETILDGIVDPVDSTLRDFCGRCIREFLKWS). Position 1075 is a phosphoserine (S1075). K1219 is subject to N6-acetyllysine. The interval 1516–1551 (LDPSCKRLASGLLELAFAFGGLCEHLVDLLLDTAVL) is interaction with C1D. Positions 1516–1551 (LDPSCKRLASGLLELAFAFGGLCEHLVDLLLDTAVL) are leucine-zipper. The stretch at 1736–1769 (PMKSEEFPVGTLRYSNYVDCMKKFLDALELSQSP) is one TPR 1 repeat. K1983 carries the N6-acetyllysine modification. A Phosphoserine; by autocatalysis modification is found at S2069. An N6-acetyllysine modification is found at K2271. The tract at residues 2448 to 3228 (LDIIYKMMAK…DHSLSMDEER (781 aa)) is KIP-binding. At T2547 the chain carries Phosphothreonine. T2621 carries the post-translational modification Phosphothreonine; by autocatalysis. At S2624 the chain carries Phosphoserine; by autocatalysis. Residues T2650 and T2659 each carry the phosphothreonine; by autocatalysis modification. The interval 2697–2729 (AQKRNEKSQRAPLKSVGPDFGEKKLGLPGDKVD) is disordered. The segment covering 2716–2729 (FGEKKLGLPGDKVD) has biased composition (basic and acidic residues). Positions 2753–2781 (EKLSLIYARKGIAEQKREKEIKSELKMKH) are may split the end of the DNA molecule, with the two strands separating around the region. At S2805 the chain carries Phosphoserine. TPR repeat units follow at residues 2903–2935 (PVGVRLLEEALLHLGPQEPPAKQFKGRMRVSPD), 2936–2964 (VVRWMELAKLYRSIGEYDILRGIFSSEIG), and 2965–2998 (TKQITQSAIFAEARSDYSEAAKQYNEALNKEEWV). An FAT domain is found at 2922 to 3555 (PAKQFKGRMR…VYPFIISSES (634 aa)). S3221 carries the phosphoserine modification. 4 positions are modified to N6-acetyllysine: K3257, K3276, K3654, and K3658. A TPR 5 repeat occupies 3711 to 3748 (LRNELEIPGQYDGKGKPLPEYHARIAGFDERIKVMASI). In terms of domain architecture, PI3K/PI4K catalytic spans 3738–4069 (FDERIKVMAS…IHYAKRKLAG (332 aa)). Residues 3744-3750 (VMASIRK) form a G-loop region. Residues S3747 and S3837 each carry the phosphoserine modification. The catalytic loop stretch occupies residues 3935–3943 (GIGDRHLNN). The tract at residues 3955 to 3980 (GIDFGHAFGSATQFLPVPELMPFRLT) is activation loop. Phosphoserine is present on S4042. Positions 4112 to 4144 (NGLSEEAQVKCLIDQATDPNILGRTWIGWEPWM) constitute an FATC domain.

This sequence belongs to the PI3/PI4-kinase family. As to quaternary structure, DNA-PK is a heterotrimer of PRKDC and the Ku dimer (composed of XRCC6/Ku70 and XRCC5/Ku86). Formation of this complex may be promoted by interaction with ILF3. Component of the core long-range non-homologous end joining (NHEJ) complex (also named DNA-PK complex) composed of PRKDC, LIG4, XRCC4, XRCC6/Ku70, XRCC5/Ku86 and NHEJ1/XLF. Additional component of the NHEJ complex includes PAXX. Following autophosphorylation, PRKDC dissociates from DNA. Interacts with DNA-PKcs-interacting protein (KIP) with the region upstream the kinase domain. PRKDC alone also interacts with and phosphorylates DCLRE1C, thereby activating the latent endonuclease activity of this protein. Interacts with C1D. Interacts with TTI1 and TELO2. Interacts with CIB1. Interacts with SETX. Interacts with NR4A3; the DNA-dependent protein kinase complex DNA-PK phosphorylates and activates NR4A3 and prevents NR4A3 ubiquitination and degradation. Interacts with BRAT1. Part of the HDP-RNP complex composed of at least HEXIM1, PRKDC, XRCC5, XRCC6, paraspeckle proteins (SFPQ, NONO, PSPC1, RBM14, and MATR3) and NEAT1 RNA. Interacts with KAT5. Post-translationally, autophosphorylated at two clusters, the T2609 cluster and the S2056 cluster. Autophosphorylated on Ser-2069, Thr-2621, Thr-2650 and Thr-2659. Ser-2069 and Thr-2621 are DNA damage-inducible phosphorylation sites (inducible with ionizing radiation, IR) dephosphorylated by PPP5C. Autophosphorylation induces a conformational change that leads to remodeling of the DNA-PK complex, requisite for efficient end processing and DNA repair. Autophosphorylation in trans within DNA-PK complexes loaded on DNA ends leads to the dissociation of PRKDC from DNA and the transition into the short-range NHEJ complex. Autophosphorylation of the T2609 cluster is required for hematopoietic development and protein synthesis in erythrocytes precursors. In terms of processing, S-nitrosylated by GAPDH. Polyubiquitinated by RNF144A, leading to proteasomal degradation.

The protein resides in the nucleus. The protein localises to the nucleolus. Its subcellular location is the cytoplasm. It is found in the cytosol. It catalyses the reaction L-seryl-[protein] + ATP = O-phospho-L-seryl-[protein] + ADP + H(+). It carries out the reaction L-threonyl-[protein] + ATP = O-phospho-L-threonyl-[protein] + ADP + H(+). With respect to regulation, activity seems to be attenuated by autophosphorylation. Binding to the SL1 region of U3 small nucleolar RNA promotes auto-phosphorylation activity. Inhibited by wortmannin. Serine/threonine-protein kinase that acts as a molecular sensor for DNA damage. Involved in DNA non-homologous end joining (NHEJ) required for double-strand break (DSB) repair and V(D)J recombination. Must be bound to DNA to express its catalytic properties. Promotes processing of hairpin DNA structures in V(D)J recombination by activation of the hairpin endonuclease artemis (DCLRE1C). Recruited by XRCC5 and XRCC6 to DNA ends and is required to (1) protect and align broken ends of DNA, thereby preventing their degradation, (2) and sequester the DSB for repair by NHEJ. Acts as a scaffold protein to aid the localization of DNA repair proteins to the site of damage. The assembly of the DNA-PK complex at DNA ends is also required for the NHEJ ligation step. Found at the ends of chromosomes, suggesting a further role in the maintenance of telomeric stability and the prevention of chromosomal end fusion. Also involved in modulation of transcription. As part of the DNA-PK complex, involved in the early steps of ribosome assembly by promoting the processing of precursor rRNA into mature 18S rRNA in the small-subunit processome. Binding to U3 small nucleolar RNA, recruits PRKDC and XRCC5/Ku86 to the small-subunit processome. Recognizes the substrate consensus sequence [ST]-Q. Phosphorylates 'Ser-139' of histone variant H2AX, thereby regulating DNA damage response mechanism. Phosphorylates ASF1A, DCLRE1C, c-Abl/ABL1, histone H1, HSPCA, c-jun/JUN, p53/TP53, PARP1, POU2F1, DHX9, FH, SRF, NHEJ1/XLF, XRCC1, XRCC4, XRCC5, XRCC6, WRN, MYC and RFA2. Can phosphorylate C1D not only in the presence of linear DNA but also in the presence of supercoiled DNA. Ability to phosphorylate p53/TP53 in the presence of supercoiled DNA is dependent on C1D. Acts as a regulator of the phosphatidylinositol 3-kinase/protein kinase B signal transduction by mediating phosphorylation of 'Ser-473' of protein kinase B (PKB/AKT1, PKB/AKT2, PKB/AKT3), promoting their activation. Contributes to the determination of the circadian period length by antagonizing phosphorylation of CRY1 'Ser-588' and increasing CRY1 protein stability, most likely through an indirect mechanism. Plays a role in the regulation of DNA virus-mediated innate immune response by assembling into the HDP-RNP complex, a complex that serves as a platform for IRF3 phosphorylation and subsequent innate immune response activation through the cGAS-STING pathway. Also regulates the cGAS-STING pathway by catalyzing phosphorylation of CGAS, thereby impairing CGAS oligomerization and activation. Also regulates the cGAS-STING pathway by mediating phosphorylation of PARP1. The polypeptide is DNA-dependent protein kinase catalytic subunit (PRKDC) (Canis lupus familiaris (Dog)).